A 490-amino-acid chain; its full sequence is Colicin-10 (490 aa).

Polar residues predominate over residues methionine 1–serine 20. 2 disordered regions span residues methionine 1 to glycine 29 and glutamine 146 to arginine 171. Over residues glutamine 146–alanine 170 the composition is skewed to basic and acidic residues. A helical membrane pass occupies residues isoleucine 447–isoleucine 467.

The protein belongs to the channel forming colicin family.

It is found in the host membrane. In terms of biological role, this colicin is a channel-forming colicin. This class of transmembrane toxins depolarize the cytoplasmic membrane, leading to dissipation of cellular energy. Its function is as follows. Colicins are polypeptide toxins produced by and active against E.coli and closely related bacteria. The sequence is that of Colicin-10 (cta) from Escherichia coli.